The sequence spans 333 residues: L-lactate dehydrogenase (333 aa).

NAD(+)-binding positions include 29–57 (GQVG…VADK) and Arg-99. Substrate-binding residues include Arg-106, Asn-138, and Arg-169. An NAD(+)-binding site is contributed by Asn-138. His-193 acts as the Proton acceptor in catalysis. Thr-249 contributes to the substrate binding site.

The protein belongs to the LDH/MDH superfamily. LDH family. In terms of assembly, homotetramer.

The protein localises to the cytoplasm. It carries out the reaction (S)-lactate + NAD(+) = pyruvate + NADH + H(+). Its pathway is fermentation; pyruvate fermentation to lactate; (S)-lactate from pyruvate: step 1/1. The sequence is that of L-lactate dehydrogenase (ldh-1) from Caenorhabditis elegans.